The following is a 352-amino-acid chain: Putative GATA transcription factor 22 (352 aa).

The disordered stretch occupies residues 27 to 53; sequence SLHHHLQQQQQQQQHFHHQASSNPSSL. The segment covering 33–53 has biased composition (low complexity); it reads QQQQQQQQHFHHQASSNPSSL. Positions 112–119 match the Nuclear localization signal motif; it reads PKKETRLK. The segment at 163–189 is disordered; the sequence is AIITTSDSSKQHTNNDQSSNLSNSERQ. Positions 165–189 are enriched in polar residues; sequence ITTSDSSKQHTNNDQSSNLSNSERQ. The GATA-type zinc-finger motif lies at 195 to 249; the sequence is DCVIRICSDCNTTKTPLWRSGPRGPKSLCNACGIRQRKARRAAMATATATAVSGV.

This sequence belongs to the type IV zinc-finger family. Class B subfamily. Forms heterodimers with GATA18. Expressed predominantly in leaves, and barely in stems, flowers and siliques.

It localises to the nucleus. Functionally, transcriptional regulator that specifically binds 5'-GATA-3' or 5'-GAT-3' motifs within gene promoters. Involved in the modulation of chloroplast development, growth and division in a cytokinin-dependent manner. Repressor of the gibberellic acid (GA) signaling pathway that regulates flowering and modulates greening, in a SOC1-dependent manner. Prevents the accumulation of SOC1 during flowering. Promotes chlorophyll biosynthesis throughout the plant, by regulating chlorophyll biosynthetic genes (e.g. HEMA1 and GUN4) and chloroplast localized glutamate synthase (e.g. GLU1). Involved in the regulation of sugar-sensing genes (e.g. HXK1, HXK2, STP13 and PLT6). Regulator of germination, senescence, elongation growth and flowering time. Influences also leaf starch content. The sequence is that of Putative GATA transcription factor 22 from Arabidopsis thaliana (Mouse-ear cress).